The following is a 578-amino-acid chain: Paraneoplastic antigen Ma6F (578 aa).

Disordered regions lie at residues 106 to 221 (AQPQ…AGAA) and 441 to 578 (AAPV…PPGK). Low complexity predominate over residues 112-129 (AVARGAGEAGAAGEAGSV). Residues 147–159 (GGIGEAGGVGEAG) show a composition bias toward gly residues. Over residues 160–173 (AAGEAGAAGEAGAA) the composition is skewed to low complexity. The segment covering 174–211 (GEAGGAGEAGGAGEAGGAGEEGGTGEEGGAGEAGGAGE) has biased composition (gly residues). The segment covering 449-461 (PAAAQASPAQGDA) has biased composition (low complexity). 2 stretches are compositionally biased toward acidic residues: residues 462-473 (SEADPGAEDADE) and 556-566 (EESENEDEDGA).

This is Paraneoplastic antigen Ma6F from Homo sapiens (Human).